The following is a 176-amino-acid chain: Large ribosomal subunit protein uL6 (176 aa).

The protein belongs to the universal ribosomal protein uL6 family. As to quaternary structure, part of the 50S ribosomal subunit.

Its function is as follows. This protein binds to the 23S rRNA, and is important in its secondary structure. It is located near the subunit interface in the base of the L7/L12 stalk, and near the tRNA binding site of the peptidyltransferase center. This Dechloromonas aromatica (strain RCB) protein is Large ribosomal subunit protein uL6.